Consider the following 630-residue polypeptide: Ubiquitin carboxyl-terminal hydrolase MINDY-2 (630 aa).

The interval 1–209 (MESGPESLQP…RVPEEEEGAA (209 aa)) is disordered. Residues 24–33 (GSPQEGQQET) show a composition bias toward polar residues. S94 carries the phosphoserine modification. Composition is skewed to low complexity over residues 141–163 (EESA…SCSD) and 170–191 (SPSL…SSEF). C267 (nucleophile) is an active-site residue. The active-site Proton acceptor is the H449. The ubiquitin-binding domain (UBD) stretch occupies residues 508-560 (GQQDQIDQDYLMALSLQQEQQSQEINWEQIPEGISDLELAKKLQEEEDRRASQ). Over residues 564 to 599 (EQEQAAAAAASASASASASASTQAPQSQPVQASPSS) the composition is skewed to low complexity. A disordered region spans residues 564 to 630 (EQEQAAAAAA…EKEKNSCVIL (67 aa)). Positions 606–630 (SERKRKEPREKDKEKEKEKNSCVIL) are enriched in basic and acidic residues.

Belongs to the MINDY deubiquitinase family. FAM63 subfamily.

The enzyme catalyses Thiol-dependent hydrolysis of ester, thioester, amide, peptide and isopeptide bonds formed by the C-terminal Gly of ubiquitin (a 76-residue protein attached to proteins as an intracellular targeting signal).. In terms of biological role, hydrolase that can remove 'Lys-48'-linked conjugated ubiquitin from proteins. Can also bind to polyubiquitin chains of different linkage types, including 'Lys-6', 'Lys-11', 'Lys-29', 'Lys-33' and 'Lys-63'. May play a regulatory role at the level of protein turnover. The protein is Ubiquitin carboxyl-terminal hydrolase MINDY-2 (MINDY2) of Bos taurus (Bovine).